The chain runs to 145 residues: Deoxyuridine 5'-triphosphate nucleotidohydrolase (145 aa).

Substrate-binding positions include 63–65 (RSG), Gln76, and 80–82 (TVD).

It belongs to the dUTPase family. It depends on Mg(2+) as a cofactor.

The enzyme catalyses dUTP + H2O = dUMP + diphosphate + H(+). It participates in pyrimidine metabolism; dUMP biosynthesis; dUMP from dCTP (dUTP route): step 2/2. This enzyme is involved in nucleotide metabolism: it produces dUMP, the immediate precursor of thymidine nucleotides and it decreases the intracellular concentration of dUTP so that uracil cannot be incorporated into DNA. This is Deoxyuridine 5'-triphosphate nucleotidohydrolase from Chlamydia muridarum (strain MoPn / Nigg).